The primary structure comprises 502 residues: High affinity nitrate transporter 2.5 (502 aa).

Transmembrane regions (helical) follow at residues 51 to 71 (WFQF…LPVI), 87 to 107 (IASV…CDLF), 111 to 131 (LASA…AGIK), 133 to 153 (PIGF…FVST), 172 to 192 (IAAG…PIVF), 208 to 228 (IAFF…LLFG), 264 to 284 (WITA…DNII), 300 to 320 (GIIA…GGIF), 334 to 354 (LWAW…LGQI), 361 to 381 (IIVM…TFGV), 393 to 413 (VSGM…LIFF), and 423 to 443 (GITL…LIYF). Residues 477–502 (LHIGSQKFAETSISERGRATTTHPQT) form a disordered region.

Belongs to the major facilitator superfamily. Nitrate/nitrite porter (TC 2.A.1.8) family. Oligomeric molecular complex with NRT3.1. Expressed in roots, shoots and seeds. Expressed in leaves. Expressed in root hair zone of the primary root and the lateral roots, but not in the lateral root tip or in older parts of the roots. Detected mainly in the epidermis and the cortex. Expressed in shoots only in higher-order veins.

The protein resides in the cell membrane. In terms of biological role, nitrate transporter involved in the constitutive high-affinity transport system (cHATS) under long-term N starvation conditions. Predominantly expressed in roots of nitrate-deprived plants as a 150 kDa molecular complex with NRT3.1 representing the major contributor to cHATS influx. The principal role of this cHATS is to enable roots previously deprived of nitrate to absorb this ion and initiate induction of nitrate-inducible genes. Not involved in transfer of nitrate from roots to shoots. Contributes to phloem loading of nitrate in shoots during N starvation, but not required for growth and nitrate uptake in young plants. Required for the nitrate uptake-independent plant growth promotion and lateral root response to the rhizospheric Phyllobacterium. Might be involved in the transfer of nitrate from stored pools to cytoplasm. This is High affinity nitrate transporter 2.5 (NRT2.5) from Arabidopsis thaliana (Mouse-ear cress).